The sequence spans 141 residues: Large ribosomal subunit protein uL16 (141 aa).

The segment at 1-21 (MLMPKRVKYRKQQRGHNRGMA) is disordered.

The protein belongs to the universal ribosomal protein uL16 family. Part of the 50S ribosomal subunit.

Its function is as follows. Binds 23S rRNA and is also seen to make contacts with the A and possibly P site tRNAs. This is Large ribosomal subunit protein uL16 from Roseiflexus castenholzii (strain DSM 13941 / HLO8).